We begin with the raw amino-acid sequence, 363 residues long: 3-dehydroquinate synthase (363 aa).

Residues 109-113, 133-134, lysine 146, and lysine 155 contribute to the NAD(+) site; these read GASTD and TT. Residues glutamate 188, histidine 251, and histidine 267 each coordinate Zn(2+).

It belongs to the sugar phosphate cyclases superfamily. Dehydroquinate synthase family. Requires NAD(+) as cofactor. Co(2+) is required as a cofactor. Zn(2+) serves as cofactor.

It localises to the cytoplasm. The catalysed reaction is 7-phospho-2-dehydro-3-deoxy-D-arabino-heptonate = 3-dehydroquinate + phosphate. The protein operates within metabolic intermediate biosynthesis; chorismate biosynthesis; chorismate from D-erythrose 4-phosphate and phosphoenolpyruvate: step 2/7. In terms of biological role, catalyzes the conversion of 3-deoxy-D-arabino-heptulosonate 7-phosphate (DAHP) to dehydroquinate (DHQ). The protein is 3-dehydroquinate synthase of Streptomyces coelicolor (strain ATCC BAA-471 / A3(2) / M145).